A 119-amino-acid polypeptide reads, in one-letter code: MSISKDDILNAVAEMSVMDVVALIEAMEEKFGVSASAAVAAAGPAEAADEQTEFNVVMTSFGEKKVAVIKAVRGATGLGLKEAKDLVESLGVVKEGVEKAEAEELKKTLEEAGASVEIK.

The protein belongs to the bacterial ribosomal protein bL12 family. As to quaternary structure, homodimer. Part of the ribosomal stalk of the 50S ribosomal subunit. Forms a multimeric L10(L12)X complex, where L10 forms an elongated spine to which 2 to 4 L12 dimers bind in a sequential fashion. Binds GTP-bound translation factors.

Functionally, forms part of the ribosomal stalk which helps the ribosome interact with GTP-bound translation factors. Is thus essential for accurate translation. This chain is Large ribosomal subunit protein bL12, found in Colwellia psychrerythraea (strain 34H / ATCC BAA-681) (Vibrio psychroerythus).